We begin with the raw amino-acid sequence, 94 residues long: Small ribosomal subunit protein uS19 (94 aa).

It belongs to the universal ribosomal protein uS19 family.

Protein S19 forms a complex with S13 that binds strongly to the 16S ribosomal RNA. The sequence is that of Small ribosomal subunit protein uS19 from Acidobacterium capsulatum (strain ATCC 51196 / DSM 11244 / BCRC 80197 / JCM 7670 / NBRC 15755 / NCIMB 13165 / 161).